The sequence spans 612 residues: Siderophore iron transporter 1 (612 aa).

Phosphoserine is present on residues serine 5, serine 21, serine 22, serine 36, and serine 41. A run of 14 helical transmembrane segments spans residues isoleucine 91 to alanine 111, phenylalanine 125 to isoleucine 145, leucine 159 to serine 179, glycine 188 to alanine 208, leucine 218 to alanine 238, tryptophan 249 to tyrosine 269, isoleucine 299 to alanine 319, phenylalanine 331 to phenylalanine 351, glutamate 365 to tryptophan 385, tyrosine 406 to isoleucine 426, tryptophan 434 to tyrosine 453, isoleucine 464 to alanine 484, alanine 495 to isoleucine 515, and isoleucine 573 to alanine 593.

This sequence belongs to the major facilitator superfamily.

The protein localises to the membrane. In terms of biological role, involved in the transport of siderophore iron and so has a role in iron homeostasis. The protein is Siderophore iron transporter 1 (str1) of Schizosaccharomyces pombe (strain 972 / ATCC 24843) (Fission yeast).